Consider the following 221-residue polypeptide: Large ribosomal subunit protein uL4 (221 aa).

The tract at residues 56-83 (HATKTRGMVSGGGRKPWKQKGTGRARQG) is disordered.

The protein belongs to the universal ribosomal protein uL4 family. As to quaternary structure, part of the 50S ribosomal subunit.

In terms of biological role, one of the primary rRNA binding proteins, this protein initially binds near the 5'-end of the 23S rRNA. It is important during the early stages of 50S assembly. It makes multiple contacts with different domains of the 23S rRNA in the assembled 50S subunit and ribosome. Forms part of the polypeptide exit tunnel. This is Large ribosomal subunit protein uL4 from Bifidobacterium adolescentis (strain ATCC 15703 / DSM 20083 / NCTC 11814 / E194a).